The primary structure comprises 657 residues: Penicillin-binding protein activator LpoA (657 aa).

The signal sequence occupies residues 1–25 (MLSSTFVRSKAGLVPVILAALILAA). The N-palmitoyl cysteine moiety is linked to residue C26. C26 carries S-diacylglycerol cysteine lipidation.

The protein belongs to the LpoA family. Interacts with PBP1a.

The protein localises to the cell outer membrane. Its function is as follows. Regulator of peptidoglycan synthesis that is essential for the function of penicillin-binding protein 1A (PBP1a). The polypeptide is Penicillin-binding protein activator LpoA (Yersinia pseudotuberculosis serotype O:1b (strain IP 31758)).